The chain runs to 378 residues: Bifunctional enzyme IspD/IspF (378 aa).

The interval 1–222 is 2-C-methyl-D-erythritol 4-phosphate cytidylyltransferase; sequence MTETVAIIVA…RLLSPTGAPR (222 aa). The interval 222–378 is 2-C-methyl-D-erythritol 2,4-cyclodiphosphate synthase; it reads RIGKGYDVHE…EAVALLMPKG (157 aa). The a divalent metal cation site is built by D228 and H230. 4-CDP-2-C-methyl-D-erythritol 2-phosphate contacts are provided by residues 228 to 230 and 254 to 255; these read DVH and HS. H262 lines the a divalent metal cation pocket. 4-CDP-2-C-methyl-D-erythritol 2-phosphate is bound by residues 276–278, 352–355, F359, and R362; these read DIG and TTTE.

In the N-terminal section; belongs to the IspD/TarI cytidylyltransferase family. IspD subfamily. This sequence in the C-terminal section; belongs to the IspF family. It depends on a divalent metal cation as a cofactor.

The catalysed reaction is 2-C-methyl-D-erythritol 4-phosphate + CTP + H(+) = 4-CDP-2-C-methyl-D-erythritol + diphosphate. The enzyme catalyses 4-CDP-2-C-methyl-D-erythritol 2-phosphate = 2-C-methyl-D-erythritol 2,4-cyclic diphosphate + CMP. It participates in isoprenoid biosynthesis; isopentenyl diphosphate biosynthesis via DXP pathway; isopentenyl diphosphate from 1-deoxy-D-xylulose 5-phosphate: step 2/6. The protein operates within isoprenoid biosynthesis; isopentenyl diphosphate biosynthesis via DXP pathway; isopentenyl diphosphate from 1-deoxy-D-xylulose 5-phosphate: step 4/6. Its function is as follows. Bifunctional enzyme that catalyzes the formation of 4-diphosphocytidyl-2-C-methyl-D-erythritol from CTP and 2-C-methyl-D-erythritol 4-phosphate (MEP) (IspD), and catalyzes the conversion of 4-diphosphocytidyl-2-C-methyl-D-erythritol 2-phosphate (CDP-ME2P) to 2-C-methyl-D-erythritol 2,4-cyclodiphosphate (ME-CPP) with a corresponding release of cytidine 5-monophosphate (CMP) (IspF). The chain is Bifunctional enzyme IspD/IspF from Hyphomonas neptunium (strain ATCC 15444).